Consider the following 681-residue polypeptide: Peroxisomal acyl-coenzyme A oxidase 2 (681 aa).

2 positions are modified to phosphoserine: Ser-3 and Ser-9. Thr-13 is modified (phosphothreonine). Lys-66, Lys-137, Lys-453, and Lys-561 each carry N6-succinyllysine. Residues 679-681 carry the Microbody targeting signal motif; sequence SKL.

It belongs to the acyl-CoA oxidase family. As to quaternary structure, homodimer. FAD is required as a cofactor. As to expression, present in all tissues tested: heart, brain, placenta, lung, liver, skeletal muscle, kidney and pancreas. Most abundant in heart, liver and kidney.

The protein resides in the peroxisome. The enzyme catalyses (25R)-3alpha,7alpha,12alpha-trihydroxy-5beta-cholestan-26-oyl-CoA + A + H2O = (24R,25R)-3alpha,7alpha,12alpha,24-tetrahydroxy-5beta-cholestan-26-oyl-CoA + AH2. It catalyses the reaction (25S)-3alpha,7alpha,12alpha-trihydroxy-5beta-cholestan-26-oyl-CoA + O2 = (24E)-3alpha,7alpha,12alpha-trihydroxy-5beta-cholest-24-en-26-oyl-CoA + H2O2. Functionally, oxidizes the CoA esters of the bile acid intermediates di- and tri-hydroxycholestanoic acids. Capable of oxidizing short as well as long chain 2-methyl branched fatty acids. The protein is Peroxisomal acyl-coenzyme A oxidase 2 of Homo sapiens (Human).